The sequence spans 276 residues: NADPH-dependent 7-cyano-7-deazaguanine reductase (276 aa).

Residue 83–85 coordinates substrate; sequence IES. Residue 85 to 86 participates in NADPH binding; that stretch reads SK. The active-site Thioimide intermediate is C184. Residue D191 is the Proton donor of the active site. Substrate is bound at residue 223-224; the sequence is HE. 252 to 253 contributes to the NADPH binding site; the sequence is RG.

Belongs to the GTP cyclohydrolase I family. QueF type 2 subfamily. In terms of assembly, homodimer.

It localises to the cytoplasm. It catalyses the reaction 7-aminomethyl-7-carbaguanine + 2 NADP(+) = 7-cyano-7-deazaguanine + 2 NADPH + 3 H(+). It participates in tRNA modification; tRNA-queuosine biosynthesis. Functionally, catalyzes the NADPH-dependent reduction of 7-cyano-7-deazaguanine (preQ0) to 7-aminomethyl-7-deazaguanine (preQ1). The sequence is that of NADPH-dependent 7-cyano-7-deazaguanine reductase from Pseudomonas entomophila (strain L48).